We begin with the raw amino-acid sequence, 143 residues long: Nucleoside diphosphate kinase (143 aa).

ATP is bound by residues Lys11, Phe59, Arg87, Thr93, Arg104, and Asn114. The active-site Pros-phosphohistidine intermediate is His117.

This sequence belongs to the NDK family. As to quaternary structure, homotetramer. Mg(2+) serves as cofactor.

It localises to the cytoplasm. It catalyses the reaction a 2'-deoxyribonucleoside 5'-diphosphate + ATP = a 2'-deoxyribonucleoside 5'-triphosphate + ADP. The enzyme catalyses a ribonucleoside 5'-diphosphate + ATP = a ribonucleoside 5'-triphosphate + ADP. Its function is as follows. Major role in the synthesis of nucleoside triphosphates other than ATP. The ATP gamma phosphate is transferred to the NDP beta phosphate via a ping-pong mechanism, using a phosphorylated active-site intermediate. The chain is Nucleoside diphosphate kinase from Acinetobacter baylyi (strain ATCC 33305 / BD413 / ADP1).